The primary structure comprises 643 residues: MHGLLLAGLLALPLNVFAHPTESHSSGVSRRAIDITSYRLPQISKYTKSDAVPKQDGESFTTSSTGDDNVSSGDYVTTATNWLKKTLPKATYRLVNDHYIGDSGIGHVHFRQTAHGIDIDNTDFNVNIGRDGKVFSFGNSFYDGEIPKANPMVKRDFSDPVNALHGAIQTLNLPVTAKPENVKAKPVEGKENFKFEGTSGALSDPKAQLVYLQKDGGLVLSWKVETDVGDNWLLTYVDANKNDQVHSVVDYVSAAEYQVYPWGINDPTEGNRTTIHLPWLKTLSTDWHIDGKGWYPTTRGNNAIAQENPTGHPEYENNYRPKSPLFIFKYPYSPAMTPPSSYRDASITQLFYTTNVYHDVLYILGFNEKAGNFQINNWNKGGVGGDFAILNSQDGSGVNNANFATPPDGQPGRMRMYTWNASTPERDGCFEAGIVIHEYTHGVSNRLTGGPENSRCLAALESGGMGEGWSDFFATAIRLKAGDTRATDYTMGEWASNRPNGIRKYRYSTSLTTNPHMYVDADGLTSVHAIGTIWASMLYELLWNLIDKHGKGDVTKIRPVLKNGVPTDGRHLAMKIVLDGMALQPCLPNFVQARDAILDADKNLTQGSNKCEIWKAFAKRGLGVGAAFNQTKRTGSNELPAGC.

A signal peptide spans 1 to 18 (MHGLLLAGLLALPLNVFA). Positions 19–254 (HPTESHSSGV…VHSVVDYVSA (236 aa)) are excised as a propeptide. Residues 49 to 69 (SDAVPKQDGESFTTSSTGDDN) are disordered. Residues 58–69 (ESFTTSSTGDDN) are compositionally biased toward polar residues. Residues N271 and N420 are each glycosylated (N-linked (GlcNAc...) asparagine). Zn(2+) is bound at residue H437. E438 is an active-site residue. H441 provides a ligand contact to Zn(2+). N-linked (GlcNAc...) asparagine glycosylation is found at N603 and N629.

This sequence belongs to the peptidase M36 family. The cofactor is Zn(2+).

The protein resides in the secreted. Functionally, secreted metalloproteinase probably acting as a virulence factor. This is Probable extracellular metalloproteinase 4 (MEP4) from Trichophyton verrucosum (strain HKI 0517).